We begin with the raw amino-acid sequence, 415 residues long: Elongation factor 1-gamma 1 (415 aa).

S2 carries the N-acetylserine modification. In terms of domain architecture, GST N-terminal spans 2–78 (SQGTLYANFR…YLVKLSQDDK (77 aa)). Phosphothreonine is present on T32. In terms of domain architecture, GST C-terminal spans 89–215 (DLNAQAQIIR…KDFKFADKPL (127 aa)). The disordered stretch occupies residues 212–256 (DKPLSPPQKKKEKKAPAAAPAASKKKEEAKPAATETETSSKKPKH). Residues 254 to 415 (PKHPLELLGK…KEIVDGKVLK (162 aa)) enclose the EF-1-gamma C-terminal domain.

As to quaternary structure, the eukaryotic elongation factor 1 complex (eEF1) is probably a heterohexamer. Two trimeric complexes, each composed of eEF1A (TEF1 or TEF2), eEF1Balpha (EFB1) and eEF1Bgamma (CAM1 or TEF4), are probably dimerized via the eF1Bgamma subunits. The eEF1B subcomplex with the GEF activity is formed of eEF1Balpha and eEF1Bgamma. CAM1 interacts with EFB1. Component of a complex bound to MXR1 promoter region.

Its subcellular location is the cytoplasm. The protein resides in the nucleus. It participates in protein biosynthesis; polypeptide chain elongation. Subunit of the eukaryotic elongation factor 1 complex (eEF1). Probably plays a role in anchoring the complex to other cellular components. May be involved in transcriptional regulation of MXR1. This Saccharomyces cerevisiae (strain ATCC 204508 / S288c) (Baker's yeast) protein is Elongation factor 1-gamma 1 (CAM1).